Reading from the N-terminus, the 74-residue chain is Translational regulator CsrA (74 aa).

It belongs to the CsrA/RsmA family. As to quaternary structure, homodimer; the beta-strands of each monomer intercalate to form a hydrophobic core, while the alpha-helices form wings that extend away from the core.

It localises to the cytoplasm. In terms of biological role, a translational regulator that binds mRNA to regulate translation initiation and/or mRNA stability. Usually binds in the 5'-UTR at or near the Shine-Dalgarno sequence preventing ribosome-binding, thus repressing translation. Its main target seems to be the major flagellin gene, while its function is anatagonized by FliW. In Oceanobacillus iheyensis (strain DSM 14371 / CIP 107618 / JCM 11309 / KCTC 3954 / HTE831), this protein is Translational regulator CsrA.